The following is a 271-amino-acid chain: ATP synthase subunit delta (271 aa).

The protein belongs to the ATPase delta chain family. As to quaternary structure, F-type ATPases have 2 components, F(1) - the catalytic core - and F(0) - the membrane proton channel. F(1) has five subunits: alpha(3), beta(3), gamma(1), delta(1), epsilon(1). F(0) has three main subunits: a(1), b(2) and c(10-14). The alpha and beta chains form an alternating ring which encloses part of the gamma chain. F(1) is attached to F(0) by a central stalk formed by the gamma and epsilon chains, while a peripheral stalk is formed by the delta and b chains.

It is found in the cell membrane. Functionally, f(1)F(0) ATP synthase produces ATP from ADP in the presence of a proton or sodium gradient. F-type ATPases consist of two structural domains, F(1) containing the extramembraneous catalytic core and F(0) containing the membrane proton channel, linked together by a central stalk and a peripheral stalk. During catalysis, ATP synthesis in the catalytic domain of F(1) is coupled via a rotary mechanism of the central stalk subunits to proton translocation. Its function is as follows. This protein is part of the stalk that links CF(0) to CF(1). It either transmits conformational changes from CF(0) to CF(1) or is implicated in proton conduction. In Corynebacterium kroppenstedtii (strain DSM 44385 / JCM 11950 / CIP 105744 / CCUG 35717), this protein is ATP synthase subunit delta.